The primary structure comprises 352 residues: Protein MGF 360-16R (352 aa).

Belongs to the asfivirus MGF 360 family.

Functionally, plays a role in virus cell tropism, and may be required for efficient virus replication in macrophages. The sequence is that of Protein MGF 360-16R from African swine fever virus (isolate Warthog/Namibia/Wart80/1980) (ASFV).